The sequence spans 611 residues: Putative type II restriction enzyme HgiDII (611 aa).

Over residues 355–364 (YPSNPKKEEV) the composition is skewed to basic and acidic residues. Residues 355–434 (YPSNPKKEEV…PEPSPPPKQE (80 aa)) are disordered. Positions 381 to 409 (TNASSDSSTATENASSDSSTATENASSET) are enriched in low complexity. Repeat copies occupy residues 382-392 (NASSDSSTATE) and 393-403 (NASSDSSTATE). The segment at 382-403 (NASSDSSTATENASSDSSTATE) is 2.5 X 11 AA tandem repeats. One copy of the 3; truncated repeat lies at 404–409 (NASSET). Residues 410 to 425 (NDGEVEDNSFFDDDIP) are compositionally biased toward acidic residues.

It carries out the reaction Endonucleolytic cleavage of DNA to give specific double-stranded fragments with terminal 5'-phosphates.. According to REBASE this is a P subtype restriction enzyme that recognizes the double-stranded sequence 5'-GTCGAC-3' and cleaves after G-1. No restriction activity was detected upon overexpressing this protein in E.coli. This is Putative type II restriction enzyme HgiDII from Herpetosiphon aurantiacus (Herpetosiphon giganteus).